The sequence spans 403 residues: Envelope glycoprotein D (403 aa).

The signal sequence occupies residues 1 to 34 (MNRYRYESIFFRYISSTRMILIICLLLGIGDMSA). At 35–357 (MGLKKDNSPI…ISTEKKSRTQ (323 aa)) the chain is on the virion surface side. Residues Asn87 and Asn138 are each glycosylated (N-linked (GlcNAc...) asparagine; by host). 3 cysteine pairs are disulfide-bonded: Cys88-Cys209, Cys127-Cys222, and Cys139-Cys148. Asn230 and Asn306 each carry an N-linked (GlcNAc...) asparagine; by host glycan. Residues 358–378 (IIISLVVLCVMFCFIVIGSGI) traverse the membrane as a helical segment. The Intravirion portion of the chain corresponds to 379-403 (WILRKHRKTVMYDRRRPSRRAYSRL).

This sequence belongs to the herpesviridae glycoprotein D family.

Its subcellular location is the virion membrane. Its function is as follows. Envelope glycoprotein that binds to host cell entry receptors, promoting the virus entry into host cells. May trigger fusion with host membrane, by recruiting the fusion machinery composed of gB and gH/gL. The chain is Envelope glycoprotein D (MDV094) from Gallus gallus (Chicken).